The chain runs to 306 residues: MIKSWTKKWFLILFLMASCSSYLVATTGEKYFKMATQAFKRGDYHKAVAFYKRSCNLRVGVGCTSLGSMYEDGDGVDQNITKAVFYYRRGCNLRNHLACASLGSMYEDGDGVQKNLPKAIYYYRRGCHLKGGVSCGSLGFMYFNGTGVKQNYAKALFLSKYACSLNYGISCNFVGYMYRNAKGVQKDLKKALANFKRGCHLKDGASCVSLGYMYEVGMDVKQNGEQALNLYKKGCYLKRGSGCHNVAVMYYTGKGVPKDLDKAISYYKKGCTLGFSGSCKVLEEVIGKKSDDLQDDAQNDTQDDMQ.

A signal peptide spans M1–A25. 4 TPR repeats span residues G28 to V61, H96 to V133, G168 to A205, and G240 to G277. 7 disulfide bridges follow: C55–C63, C91–C99, C127–C135, C163–C171, C199–C207, C235–C243, and C271–C279.

This sequence belongs to the hcp beta-lactamase family.

The protein localises to the secreted. The enzyme catalyses a beta-lactam + H2O = a substituted beta-amino acid. In terms of biological role, may hydrolyze 6-aminopenicillinic acid and 7-aminocephalosporanic acid (ACA) derivatives. Binds to penicillin. The chain is Putative beta-lactamase HcpD (hcpD) from Helicobacter pylori (strain ATCC 700392 / 26695) (Campylobacter pylori).